The primary structure comprises 714 residues: Cell wall protein IFF7 (714 aa).

The signal sequence occupies residues 1 to 19; that stretch reads MLFTLSILSTLLFSTSISA. The N-linked (GlcNAc...) asparagine glycan is linked to asparagine 200. A compositionally biased stretch (polar residues) spans 320–330; it reads GPVPSQKSLPS. 2 disordered regions span residues 320-633 and 660-692; these read GPVP…AADS and PIAN…ANGS. The segment covering 346–504 has biased composition (low complexity); sequence GSSSSSSVVS…SSTPLSGDSS (159 aa). Asparagine 390, asparagine 394, asparagine 399, asparagine 421, and asparagine 473 each carry an N-linked (GlcNAc...) asparagine glycan. Residues 505 to 519 are compositionally biased toward polar residues; that stretch reads QVSSLTTGTSPDTIA. A compositionally biased stretch (low complexity) spans 520 to 544; the sequence is SFQTDSTSFGFGSGSPSSGAVQSSG. Residues 545-558 are compositionally biased toward polar residues; it reads VTNSTPNTGDVNTQ. Low complexity-rich tracts occupy residues 559–590 and 597–625; these read SNTA…TTTG and NNNN…NTNN. Residues asparagine 577, asparagine 621, asparagine 624, and asparagine 663 are each glycosylated (N-linked (GlcNAc...) asparagine). The segment covering 665-679 has biased composition (low complexity); the sequence is SSSPSSSSSSSSSSS. Asparagine 690 carries N-linked (GlcNAc...) asparagine glycosylation. A lipid anchor (GPI-anchor amidated asparagine) is attached at asparagine 690. A propeptide spans 691 to 714 (removed in mature form); that stretch reads GSSKLSIGMTFMISGFATMFALFM.

Belongs to the HYR1/IFF family. Post-translationally, the GPI-anchor is attached to the protein in the endoplasmic reticulum and serves to target the protein to the cell surface. There, the glucosamine-inositol phospholipid moiety is cleaved off and the GPI-modified mannoprotein is covalently attached via its lipidless GPI glycan remnant to the 1,6-beta-glucan of the outer cell wall layer.

It localises to the secreted. Its subcellular location is the cell wall. The protein resides in the membrane. GPI-anchored cell wall protein involved in cell wall organization, hyphal growth, as well as in host-fungal interaction and virulence. This Candida albicans (strain SC5314 / ATCC MYA-2876) (Yeast) protein is Cell wall protein IFF7 (IFF8).